The chain runs to 72 residues: DNA-directed RNA polymerase subunit Rpo10 (72 aa).

Residues cysteine 7, cysteine 10, cysteine 45, and cysteine 46 each contribute to the Zn(2+) site.

This sequence belongs to the archaeal Rpo10/eukaryotic RPB10 RNA polymerase subunit family. As to quaternary structure, part of the RNA polymerase complex. Zn(2+) is required as a cofactor.

The protein localises to the cytoplasm. It catalyses the reaction RNA(n) + a ribonucleoside 5'-triphosphate = RNA(n+1) + diphosphate. DNA-dependent RNA polymerase (RNAP) catalyzes the transcription of DNA into RNA using the four ribonucleoside triphosphates as substrates. The chain is DNA-directed RNA polymerase subunit Rpo10 from Methanopyrus kandleri (strain AV19 / DSM 6324 / JCM 9639 / NBRC 100938).